Consider the following 379-residue polypeptide: MTTNQQSVAASQPKTIVVKLGTSVLTGGTLALDRAHMVELARQCAELKKQGHSVVVVSSGAIAAGREHLGYPALPNAMASKQLLAAVGQSQLIQTWESLFALYGIKIGQMLLTRADLEDRERFLNARDTINALVDNGIIPVVNENDAVATSEIKVGDNDNLSALVGILCGADKLLLLTDQKGLYTADPRKDPNAELIKEVKVIDDTLRKIAGGSGTTLGTGGMATKLQAADIARRAGIEVIIAAGRGQNVIFDALSPAPQGTRFLPCEEALENRKRWILAGPAASGDIVIDQGAVKAVVEKGSSLLAKGVTKVLGEFSRGEVVRVTDAQGHLVARGIASYSNQDMAKIAGKHSKDIISILGYDYGSEVIHRDDMVVIQE.

Lys-19 is a binding site for ATP. Residues Ser-59, Asp-146, and Asn-158 each coordinate substrate. ATP-binding positions include 178–179 (TD) and 220–226 (TGGMATK). A PUA domain is found at 285–363 (SGDIVIDQGA…KDIISILGYD (79 aa)).

This sequence belongs to the glutamate 5-kinase family.

It is found in the cytoplasm. The enzyme catalyses L-glutamate + ATP = L-glutamyl 5-phosphate + ADP. Its pathway is amino-acid biosynthesis; L-proline biosynthesis; L-glutamate 5-semialdehyde from L-glutamate: step 1/2. Its function is as follows. Catalyzes the transfer of a phosphate group to glutamate to form L-glutamate 5-phosphate. In Vibrio vulnificus (strain YJ016), this protein is Glutamate 5-kinase.